We begin with the raw amino-acid sequence, 701 residues long: Polyribonucleotide nucleotidyltransferase (701 aa).

D487 and D493 together coordinate Mg(2+). Positions P554–V613 constitute a KH domain. Residues G623–K691 enclose the S1 motif domain.

The protein belongs to the polyribonucleotide nucleotidyltransferase family. Component of the RNA degradosome, which is a multiprotein complex involved in RNA processing and mRNA degradation. Mg(2+) is required as a cofactor.

It is found in the cytoplasm. It catalyses the reaction RNA(n+1) + phosphate = RNA(n) + a ribonucleoside 5'-diphosphate. Its function is as follows. Involved in mRNA degradation. Catalyzes the phosphorolysis of single-stranded polyribonucleotides processively in the 3'- to 5'-direction. This Stutzerimonas stutzeri (strain A1501) (Pseudomonas stutzeri) protein is Polyribonucleotide nucleotidyltransferase.